We begin with the raw amino-acid sequence, 215 residues long: FGFR1 oncogene partner 2 homolog (215 aa).

A coiled-coil region spans residues 35–183 (LLNKRVEAMK…SGLRELLGIS (149 aa)).

Belongs to the SIKE family.

The protein localises to the cytoplasm. The protein is FGFR1 oncogene partner 2 homolog (fgfr1op2) of Danio rerio (Zebrafish).